Reading from the N-terminus, the 308-residue chain is Protein translocase subunit SecF (308 aa).

6 consecutive transmembrane segments (helical) span residues 28–48, 140–160, 164–184, 194–214, 246–266, and 272–292; these read SIIL…NFGI, IEAG…YIWV, WYFG…ALGF, LSTI…SVVI, ILTV…GGEA, and ILVF…SAPI.

Belongs to the SecD/SecF family. SecF subfamily. Forms a complex with SecD. Part of the essential Sec protein translocation apparatus which comprises SecA, SecYEG and auxiliary proteins SecDF-YajC and YidC.

It is found in the cell inner membrane. Part of the Sec protein translocase complex. Interacts with the SecYEG preprotein conducting channel. SecDF uses the proton motive force (PMF) to complete protein translocation after the ATP-dependent function of SecA. In Rickettsia rickettsii (strain Sheila Smith), this protein is Protein translocase subunit SecF.